The sequence spans 483 residues: MESERDMYRQFQDWCLRTYGDSGKTKTVTRKKYERIVQLLNGSESSSTDNAKFKFWVKSKGFQLGQPDEVRGGGGGAKQVLFVRVKTTDGVGVDEKLSLRRVAVVEDFFDIIYSMHVETGPNGEQIRKHAGQKRTYKAISESYAFLPREAVTRFLMSCSECQKRMHLNPDGTDHKDNGKPPTLVTSMIDYNMPITMAYMKHMKLQLLNSQQDEDESSIESDEFDMSDSTRMSAVNSDLSSNLEERMQSPQTVHGQQDDDSAAESSNGNETLGHSSAASGGAHGREPEDSSSDGKTGLEQEEQPLNLSDSPSSAQLTSEFRIDDQGSDGKNKYKNLLISDLKMEREARENGSKSPAHSYSSYDSGKNESVDRGAEDLSLNRGDEDEDEHDEHEDSEKVNETDGVEAERLKAFNSRPIPSHLTSAVAESILASACESESRNAAKRMRLDKAQDEAAPADKQCKPEAAQATYSTATVPGSQEDPQI.

Disordered regions lie at residues 210 to 418 and 435 to 483; these read QQDE…PIPS and SESR…DPQI. The span at 211–225 shows a compositional bias: acidic residues; it reads QDEDESSIESDEFDM. 3 stretches are compositionally biased toward polar residues: residues 229 to 254, 262 to 271, and 302 to 317; these read TRMS…TVHG, AESSNGNETL, and QPLN…QLTS. Composition is skewed to basic and acidic residues over residues 319 to 330 and 340 to 350; these read FRIDDQGSDGKN and LKMEREARENG. Over residues 351 to 363 the composition is skewed to polar residues; sequence SKSPAHSYSSYDS. Basic and acidic residues-rich tracts occupy residues 364–374, 391–409, and 435–451; these read GKNESVDRGAE, HEDS…ERLK, and SESR…KAQD. The segment covering 467-483 has biased composition (polar residues); sequence ATYSTATVPGSQEDPQI.

The protein resides in the nucleus. Its subcellular location is the nucleolus. The polypeptide is Nucleolar protein 4 (Nol4) (Mus musculus (Mouse)).